Here is a 417-residue protein sequence, read N- to C-terminus: MFPRDVRIESYDPELAKAIAAETQRQEDHVELIASENYTSPAVMEAQGSQLTNKYAEGYPGKRYYGGCEYVDIAEQLAIDRLKQLFGADYANVQPHSGSQANQAVYFALLQPGDTILGMSLAHGGHLTHGAKVNASGKLFNAVQYGVNDQGLIDYDEVERLALEHKPKMVVAGFSAYSQVIDWARFRAIADKVGAYLFVDMAHVAGLVAAGVYPSPLEHAHVVTSTTHKTLRGPRGGIIVAKGAGEDLVKKLQSIVFPGIQGGPLMHVIAGKAVAFKEALEPGFKAYQQQVVKNAQAMANTLIARGYKIVSGGTQNHLMLVDMIGKDVSGKDAEAALGKAHITVNKNSVPNDPRSPFVTSGLRLGTPAVTTRGYVEQDCVDLANWIADVLDAPSDDAVIARVRDAVSAQCRKYPVYG.

(6S)-5,6,7,8-tetrahydrofolate-binding positions include leucine 121 and 125–127 (GHL). Position 229 is an N6-(pyridoxal phosphate)lysine (lysine 229). 355-357 (SPF) provides a ligand contact to (6S)-5,6,7,8-tetrahydrofolate.

This sequence belongs to the SHMT family. Homodimer. The cofactor is pyridoxal 5'-phosphate.

The protein localises to the cytoplasm. It carries out the reaction (6R)-5,10-methylene-5,6,7,8-tetrahydrofolate + glycine + H2O = (6S)-5,6,7,8-tetrahydrofolate + L-serine. It functions in the pathway one-carbon metabolism; tetrahydrofolate interconversion. Its pathway is amino-acid biosynthesis; glycine biosynthesis; glycine from L-serine: step 1/1. Functionally, catalyzes the reversible interconversion of serine and glycine with tetrahydrofolate (THF) serving as the one-carbon carrier. This reaction serves as the major source of one-carbon groups required for the biosynthesis of purines, thymidylate, methionine, and other important biomolecules. Also exhibits THF-independent aldolase activity toward beta-hydroxyamino acids, producing glycine and aldehydes, via a retro-aldol mechanism. This chain is Serine hydroxymethyltransferase, found in Stenotrophomonas maltophilia (strain R551-3).